The following is a 268-amino-acid chain: Centromere protein Q (268 aa).

Residues 1 to 31 (MSGKANASKKNFEQLKRNPKRKKDNEEVVLS) form a disordered region. Residue serine 31 is modified to Phosphoserine. Residues 170 to 203 (ELMTGNIQSLKNKIQILASEVEEEEERVKQIHQI) are a coiled coil. Position 249 is a phosphoserine (serine 249).

It belongs to the CENP-Q/OKP1 family. Component of the CENPA-CAD complex, composed of CENPI, CENPK, CENPL, CENPO, CENPP, CENPQ, CENPR and CENPS. The CENPA-CAD complex interacts with the CENPA-NAC complex, at least composed of CENPA, CENPC, CENPH, CENPM, CENPN, CENPT and CENPU.

It localises to the nucleus. The protein resides in the chromosome. It is found in the centromere. In terms of biological role, component of the CENPA-CAD (nucleosome distal) complex, a complex recruited to centromeres which is involved in assembly of kinetochore proteins, mitotic progression and chromosome segregation. May be involved in incorporation of newly synthesized CENPA into centromeres via its interaction with the CENPA-NAC complex. Plays an important role in chromosome congression and in the recruitment of CENP-O complex (which comprises CENPO, CENPP, CENPQ and CENPU), CENPE and PLK1 to the kinetochores. In Macaca fascicularis (Crab-eating macaque), this protein is Centromere protein Q (CENPQ).